The primary structure comprises 215 residues: 3,4-dihydroxy-2-butanone 4-phosphate synthase (215 aa).

D-ribulose 5-phosphate-binding positions include 37–38 (RE), Asp-42, 150–154 (RRGHT), and Glu-175. Glu-38 contacts Mg(2+). Residue His-153 coordinates Mg(2+).

It belongs to the DHBP synthase family. As to quaternary structure, homodimer. Requires Mg(2+) as cofactor. Mn(2+) serves as cofactor.

It carries out the reaction D-ribulose 5-phosphate = (2S)-2-hydroxy-3-oxobutyl phosphate + formate + H(+). Its pathway is cofactor biosynthesis; riboflavin biosynthesis; 2-hydroxy-3-oxobutyl phosphate from D-ribulose 5-phosphate: step 1/1. Its function is as follows. Catalyzes the conversion of D-ribulose 5-phosphate to formate and 3,4-dihydroxy-2-butanone 4-phosphate. The chain is 3,4-dihydroxy-2-butanone 4-phosphate synthase from Desulfatibacillum aliphaticivorans.